The primary structure comprises 128 residues: MGIQGGSVLFGLLLVLAVFCHSGNSLQCYSCPYPTTQCTMTTNCTSNLDSCLIAKAGSRVYYRCWKFEDCTFSRVSNQLSENELKYYCCKKNLCNFNEALKNGGTTLSKKTVLLLVIPFLVAAWSLHP.

An N-terminal signal peptide occupies residues 1–25 (MGIQGGSVLFGLLLVLAVFCHSGNS). The UPAR/Ly6 domain occupies 26 to 108 (LQCYSCPYPT…ALKNGGTTLS (83 aa)). 5 disulfide bridges follow: Cys28/Cys51, Cys31/Cys38, Cys44/Cys64, Cys70/Cys88, and Cys89/Cys94. The N-linked (GlcNAc...) asparagine glycan is linked to Asn43. Asn102 is lipidated: GPI-anchor amidated asparagine. The propeptide at 103 to 128 (GGTTLSKKTVLLLVIPFLVAAWSLHP) is removed in mature form.

Interacts with T-cell surface antigen CD2. N- and O-glycosylated.

The protein resides in the cell membrane. It is found in the secreted. Its function is as follows. Potent inhibitor of the complement membrane attack complex (MAC) action, which protects self-cells from damage during complement activation. Acts by binding to the beta-haipins of C8 (C8A and C8B) components of the assembling MAC, forming an intermolecular beta-sheet that prevents incorporation of the multiple copies of C9 required for complete formation of the osmolytic pore. The polypeptide is CD59 glycoprotein (Aotus trivirgatus (Three-striped night monkey)).